The primary structure comprises 294 residues: Elongation factor Ts (294 aa).

The involved in Mg(2+) ion dislocation from EF-Tu stretch occupies residues 78-81; it reads TDFV.

The protein belongs to the EF-Ts family.

It is found in the cytoplasm. Functionally, associates with the EF-Tu.GDP complex and induces the exchange of GDP to GTP. It remains bound to the aminoacyl-tRNA.EF-Tu.GTP complex up to the GTP hydrolysis stage on the ribosome. The chain is Elongation factor Ts from Mycoplasma mobile (strain ATCC 43663 / 163K / NCTC 11711) (Mesomycoplasma mobile).